An 804-amino-acid chain; its full sequence is Leucine--tRNA ligase (804 aa).

The short motif at 39 to 50 (PYPSGAGLHVGH) is the 'HIGH' region element. The short motif at 580–584 (KMSKS) is the 'KMSKS' region element. Residue Lys-583 coordinates ATP.

Belongs to the class-I aminoacyl-tRNA synthetase family.

It localises to the cytoplasm. It carries out the reaction tRNA(Leu) + L-leucine + ATP = L-leucyl-tRNA(Leu) + AMP + diphosphate. The sequence is that of Leucine--tRNA ligase from Mycoplasma capricolum subsp. capricolum (strain California kid / ATCC 27343 / NCTC 10154).